The chain runs to 72 residues: Large ribosomal subunit protein uL29 (72 aa).

Belongs to the universal ribosomal protein uL29 family.

The polypeptide is Large ribosomal subunit protein uL29 (Chlamydia trachomatis serovar L2 (strain ATCC VR-902B / DSM 19102 / 434/Bu)).